Consider the following 103-residue polypeptide: Small ribosomal subunit protein uS10 (103 aa).

Belongs to the universal ribosomal protein uS10 family. Part of the 30S ribosomal subunit.

Its function is as follows. Involved in the binding of tRNA to the ribosomes. This chain is Small ribosomal subunit protein uS10, found in Sulfurovum sp. (strain NBC37-1).